Consider the following 423-residue polypeptide: Myb-like protein G (423 aa).

The HTH myb-type domain occupies 36–90 (TISKQRENWTDEEHQKFLEALTLFDRDWKKIESFVGSKTVIQIRSHAQKYFIKVQ). Positions 63 to 86 (WKKIESFVGSKTVIQIRSHAQKYF) form a DNA-binding region, H-T-H motif. Disordered stretches follow at residues 93-116 (NTGE…QKQK), 177-205 (QQAV…GTTL), and 284-372 (ISPR…LGNY). The segment covering 177-202 (QQAVTTAQSSQRNGGLPPNPSSNNGG) has biased composition (low complexity). A compositionally biased stretch (polar residues) spans 286-295 (PRNSTGNINV). The span at 302 to 354 (NNSNNNNNNNNNNNNNNNNNNNNNNNNNNNNNNNNNNNNNNNNNNNNNNNNNN) shows a compositional bias: low complexity. Polar residues predominate over residues 361–372 (QNHSNMVNLGNY).

The protein resides in the nucleus. The sequence is that of Myb-like protein G (mybG) from Dictyostelium discoideum (Social amoeba).